A 215-amino-acid polypeptide reads, in one-letter code: Ribonuclease T (215 aa).

One can recognise an Exonuclease domain in the interval 21–195 (VVIDVETAGF…YDSKKTAELF (175 aa)). Mg(2+) is bound by residues Asp-24, Glu-26, His-182, and Asp-187. His-182 (proton donor/acceptor) is an active-site residue.

It belongs to the RNase T family. As to quaternary structure, homodimer. Requires Mg(2+) as cofactor.

Functionally, trims short 3' overhangs of a variety of RNA species, leaving a one or two nucleotide 3' overhang. Responsible for the end-turnover of tRNA: specifically removes the terminal AMP residue from uncharged tRNA (tRNA-C-C-A). Also appears to be involved in tRNA biosynthesis. The chain is Ribonuclease T from Wigglesworthia glossinidia brevipalpis.